Consider the following 286-residue polypeptide: MNDIDTITNAWGRWKTAQYGTTCWFTESTQYGRNKDTRSYMQHQTNVSAPKDLVYSNFVQQDGGSTLLGQYDMINEGSQVIELAVNLQQGLVDTFTWSVTEQLKVGVEVKVKANIPLVGGAEITSTVELSLSSTQGASTSKSSNYGASTKVLISPHSHGWGEVALSFTELRTQWVGNVGLQGYVAIWFNNKVALNNDGDYHYLWFIPVEQVFWECVQHNIVNTSGYVVQGNGVLAQATGTFHSSVGLNLKTIAHERPYPETSEAVRTFYNYASLVPDLETRVRSAE.

A propeptide spanning residues 267–286 is cleaved from the precursor; that stretch reads TFYNYASLVPDLETRVRSAE.

It belongs to the aerolysin family.

It is found in the secreted. Cytotoxin is thought to form hydrophilic pores in cell membranes. The polypeptide is Cytotoxin (ctx) (Pseudomonas aeruginosa).